The chain runs to 186 residues: Nicotinamide-nucleotide adenylyltransferase (186 aa).

This sequence belongs to the archaeal NMN adenylyltransferase family.

The protein localises to the cytoplasm. The catalysed reaction is beta-nicotinamide D-ribonucleotide + ATP + H(+) = diphosphate + NAD(+). Its pathway is cofactor biosynthesis; NAD(+) biosynthesis; NAD(+) from nicotinamide D-ribonucleotide: step 1/1. The polypeptide is Nicotinamide-nucleotide adenylyltransferase (Thermococcus sibiricus (strain DSM 12597 / MM 739)).